Reading from the N-terminus, the 188-residue chain is MLVHPEAMSVGALADKIRKIENWPQKGILFHDITPVLQSAEYFRLLVDLLVYRYMDQKIDIVAGLDARGFIIGAALAYQLNVGFVPIRKKGKLPFETVSQSYALEYGEAAVEIHTDAVKPGSRVLLVDDLVATGGTMLAGLELIRKLGGEIVEAAAILEFTDLQGGKNIRASGAPLFTLLQNEGCMKG.

This sequence belongs to the purine/pyrimidine phosphoribosyltransferase family. In terms of assembly, homodimer.

The protein localises to the cytoplasm. The catalysed reaction is AMP + diphosphate = 5-phospho-alpha-D-ribose 1-diphosphate + adenine. The protein operates within purine metabolism; AMP biosynthesis via salvage pathway; AMP from adenine: step 1/1. Catalyzes a salvage reaction resulting in the formation of AMP, that is energically less costly than de novo synthesis. This chain is Adenine phosphoribosyltransferase, found in Neisseria meningitidis serogroup C (strain 053442).